The primary structure comprises 385 residues: Proliferation-associated protein A (385 aa).

Belongs to the peptidase M24 family.

The sequence is that of Proliferation-associated protein A (prlA) from Dictyostelium discoideum (Social amoeba).